We begin with the raw amino-acid sequence, 143 residues long: FAD synthase (143 aa).

ATP contacts are provided by residues 9-10 (TF), 14-17 (HPGH), and D92.

The protein belongs to the archaeal FAD synthase family. In terms of assembly, homodimer. It depends on a divalent metal cation as a cofactor.

The enzyme catalyses FMN + ATP + H(+) = FAD + diphosphate. It participates in cofactor biosynthesis; FAD biosynthesis; FAD from FMN: step 1/1. Catalyzes the transfer of the AMP portion of ATP to flavin mononucleotide (FMN) to produce flavin adenine dinucleotide (FAD) coenzyme. The chain is FAD synthase from Methanococcoides burtonii (strain DSM 6242 / NBRC 107633 / OCM 468 / ACE-M).